A 575-amino-acid polypeptide reads, in one-letter code: V-type ATP synthase alpha chain (575 aa).

238-245 (GPFGAGKT) serves as a coordination point for ATP.

The protein belongs to the ATPase alpha/beta chains family.

The enzyme catalyses ATP + H2O + 4 H(+)(in) = ADP + phosphate + 5 H(+)(out). Its function is as follows. Produces ATP from ADP in the presence of a proton gradient across the membrane. The V-type alpha chain is a catalytic subunit. This chain is V-type ATP synthase alpha chain, found in Borrelia garinii subsp. bavariensis (strain ATCC BAA-2496 / DSM 23469 / PBi) (Borreliella bavariensis).